A 298-amino-acid polypeptide reads, in one-letter code: Exosome complex component Rrp4 (298 aa).

One can recognise an S1 motif domain in the interval 63–131 (GDVVIGKIKD…EVKKVKLGLK (69 aa)). Residues 139–197 (RGGIIVDITPTKVPRLIGKKGSMINMIKDKTNCKIIVGQNGLVWVKGEEDMEQLTKDII) enclose the KH domain. Residues 276–298 (KNKKDKPLSYGNNSGNSYILNNR) form a disordered region. The segment covering 285–298 (YGNNSGNSYILNNR) has biased composition (polar residues).

It belongs to the RRP4 family. In terms of assembly, component of the archaeal exosome complex. Forms a trimer of Rrp4 and/or Csl4 subunits. The trimer associates with a hexameric ring-like arrangement composed of 3 Rrp41-Rrp42 heterodimers.

Its subcellular location is the cytoplasm. In terms of biological role, non-catalytic component of the exosome, which is a complex involved in RNA degradation. Increases the RNA binding and the efficiency of RNA degradation. Confers strong poly(A) specificity to the exosome. In Methanobrevibacter smithii (strain ATCC 35061 / DSM 861 / OCM 144 / PS), this protein is Exosome complex component Rrp4.